The sequence spans 697 residues: MAR-binding filament-like protein 1 (697 aa).

The N-terminal 41 residues, 1–41, are a transit peptide targeting the chloroplast; it reads MATSCFPPFSASSSSLCSSQFTPLLSCPRNTQICRKKRPVM. The transit peptide at 42 to 79 directs the protein to the thylakoid; that stretch reads ASMHSENQKESNVCNRRSILFVGFSVLPLLNLRARALE. Residues 80-106 are Lumenal, thylakoid-facing; it reads GLSTDSQAQPQKEETEQTIQGSAGNPF. Residues 81–100 form a disordered region; the sequence is LSTDSQAQPQKEETEQTIQG. A helical transmembrane segment spans residues 107–127; it reads VSLLNGLGVVGSGVLGSLYAL. The Stromal segment spans residues 128-697; sequence ARNEKAVSDA…GEKEKVNVQQ (570 aa). Residues 203–671 adopt a coiled-coil conformation; the sequence is LQNEKKLAED…KGEILRLRSQ (469 aa). A disordered region spans residues 599-629; it reads TSRNSSLEDEREVHRQSVSEQKQISQEAQEN. Over residues 604-615 the composition is skewed to basic and acidic residues; that stretch reads SLEDEREVHRQS. Residues 616-627 are compositionally biased toward polar residues; it reads VSEQKQISQEAQ.

As to quaternary structure, interacts with MAF1. Interacts with PTST2; the interaction is essential for the initiation of starch granules biosynthesis in leaf chloroplasts, for the correct location of the process in the stromal spaces between the thylakoid membranes, and for the association of PTST2 with the thylakoid membranes. Phosphorylated in vitro by human casein kinase II. In terms of processing, predicted to be translocated into the thylakoid by the Tat system.

It localises to the plastid. Its subcellular location is the chloroplast. The protein resides in the chloroplast thylakoid membrane. It is found in the chloroplast stroma. The protein localises to the chloroplast nucleoid. It localises to the nucleus. Its subcellular location is the nucleus matrix. Functionally, required for the initiation of starch granules biosynthesis in leaf chloroplasts. Anchored to the thylakoid membranes with its C-terminus facing into the stroma where it is essential for localizing PTST2 and SS4 to the stromal spaces between the thylakoid membranes in order to begin starch granule formation. Associated with leaf chloroplastic nucleoids in vivo. Binds to various chloroplastic double-stranded DNA fragments without particular sequence specificity in vitro. May function at the interface between nucleoids and thylakoids possibly by anchoring nucleoids to the thylakoid membrane system in mature chloroplasts. Binds nuclear DNA. Interacts with chromatin via matrix attachment regions (MARs). Likely to participate in nuclear architecture by connecting chromatin with the nuclear matrix and potentially with the nuclear envelope. This is MAR-binding filament-like protein 1 from Solanum lycopersicum (Tomato).